Here is a 442-residue protein sequence, read N- to C-terminus: Plasmalemma vesicle-associated protein (442 aa).

The Cytoplasmic portion of the chain corresponds to 1–27; the sequence is MGLAMEHGGSYARAGGSSRGCWYYLRY. A helical; Signal-anchor for type II membrane protein transmembrane segment spans residues 28-48; sequence FFLFVSLIQFLIILGLVLFMV. The Extracellular portion of the chain corresponds to 49–442; it reads YGNVHVSTES…AGIPVAPSSG (394 aa). Residues 57 to 77 are a coiled coil; sequence ESNLQATERRAEGLYSQLLGL. 4 N-linked (GlcNAc...) asparagine glycosylation sites follow: asparagine 83, asparagine 89, asparagine 113, and asparagine 151. Coiled coils occupy residues 202–225 and 280–387; these read KTRE…QALC and SSKV…SALD. Disordered regions lie at residues 301-328 and 394-418; these read NSDL…VEKE and SQPM…PASL. A compositionally biased stretch (basic and acidic residues) spans 319 to 328; the sequence is QEAKQKVEKE.

As to quaternary structure, homodimer. Expressed in lung, kidney, heart, aorta, placenta, muscle, pituitary gland, adrenals, mammary gland, bladder, lymph node, bone marrow, trachea, digestive tract, liver and tumor-associated endothelium.

It is found in the cell membrane. It localises to the membrane. Its subcellular location is the caveola. The protein localises to the cytoplasm. The protein resides in the perinuclear region. Its function is as follows. Endothelial cell-specific membrane protein involved in the formation of the diaphragms that bridge endothelial fenestrae. It is also required for the formation of stomata of caveolae and transendothelial channels. Functions in microvascular permeability, endothelial fenestrae contributing to the passage of water and solutes and regulating transcellular versus paracellular flow in different organs. Plays a specific role in embryonic development. The polypeptide is Plasmalemma vesicle-associated protein (PLVAP) (Homo sapiens (Human)).